The primary structure comprises 230 residues: MDITPDSIIYWQWQWINLNATIVFSWLVMLILVLGSWLITRNLSIEPPLSRWQVALEIIVEQIRQQIRDASQQKADQFLPFIGTLFLFITMANLLTIFPVYQSPAGSLSTTAALALCVFVAVPIYGIKNVGITNYLRHYIQPTPVMLPFNLISEISRTVSLAIRLFGNIMSTSLLVAILISIVPLFFPAVMTLFGLLVGVIQAYVFTILAMVYIASGMNLQQRKTGNHHA.

5 helical membrane passes run 20-40, 78-98, 112-132, 174-194, and 195-215; these read ATIV…WLIT, FLPF…LTIF, AALA…NVGI, LLVA…MTLF, and GLLV…VYIA.

Belongs to the ATPase A chain family. F-type ATPases have 2 components, CF(1) - the catalytic core - and CF(0) - the membrane proton channel. CF(1) has five subunits: alpha(3), beta(3), gamma(1), delta(1), epsilon(1). CF(0) has four main subunits: a, b, b' and c.

The protein localises to the cellular thylakoid membrane. In terms of biological role, key component of the proton channel; it plays a direct role in the translocation of protons across the membrane. This Crocosphaera subtropica (strain ATCC 51142 / BH68) (Cyanothece sp. (strain ATCC 51142)) protein is ATP synthase subunit a 1.